A 565-amino-acid polypeptide reads, in one-letter code: Ubiquitin carboxyl-terminal hydrolase 21 (565 aa).

Composition is skewed to basic and acidic residues over residues methionine 1–glutamate 14 and proline 58–arginine 70. Residues methionine 1–glycine 128 are disordered. Residues glycine 71 to proline 81 are compositionally biased toward low complexity. Residues serine 104 to serine 116 are compositionally biased toward polar residues. Residues glutamate 134–arginine 152 carry the Nuclear export signal motif. A USP domain is found at valine 212 to methionine 558. Cysteine 221 serves as the catalytic Nucleophile. The segment at alanine 324–proline 347 is disordered. Zn(2+) is bound by residues cysteine 384, cysteine 387, cysteine 437, and cysteine 440. Histidine 518 functions as the Proton acceptor in the catalytic mechanism.

This sequence belongs to the peptidase C19 family. USP21 subfamily. Interacts with BEND3.

The protein localises to the cytoplasm. It localises to the nucleus. The catalysed reaction is Thiol-dependent hydrolysis of ester, thioester, amide, peptide and isopeptide bonds formed by the C-terminal Gly of ubiquitin (a 76-residue protein attached to proteins as an intracellular targeting signal).. Functionally, deubiquitinates histone H2A, a specific tag for epigenetic transcriptional repression, thereby acting as a coactivator. Deubiquitination of histone H2A releaves the repression of di- and trimethylation of histone H3 at 'Lys-4', resulting in regulation of transcriptional initiation. Regulates gene expression via histone H2A deubiquitination. Deubiquitinates BAZ2A/TIP5 leading to its stabilization. Also capable of removing NEDD8 from NEDD8 conjugates but has no effect on Sentrin-1 conjugates. Also acts as a negative regulator of the ribosome quality control (RQC) by mediating deubiquitination of 40S ribosomal proteins RPS10/eS10 and RPS20/uS10, thereby antagonizing ZNF598-mediated 40S ubiquitination. The polypeptide is Ubiquitin carboxyl-terminal hydrolase 21 (Usp21) (Rattus norvegicus (Rat)).